The sequence spans 677 residues: Threonine--tRNA ligase (677 aa).

The 59-residue stretch at 1–59 folds into the TGS domain; sequence MAQATISITVNGEAKEVEATTTGVELFAEDKNIIAVKINGENRDLYTPLNDGDTVDPIA. The segment at 255–561 is catalytic; the sequence is DHRKLGAEMD…LLEHYAGAFP (307 aa). Residues Cys360, His411, and His538 each coordinate Zn(2+).

The protein belongs to the class-II aminoacyl-tRNA synthetase family. As to quaternary structure, homodimer. Zn(2+) is required as a cofactor.

The protein resides in the cytoplasm. It carries out the reaction tRNA(Thr) + L-threonine + ATP = L-threonyl-tRNA(Thr) + AMP + diphosphate + H(+). Its function is as follows. Catalyzes the attachment of threonine to tRNA(Thr) in a two-step reaction: L-threonine is first activated by ATP to form Thr-AMP and then transferred to the acceptor end of tRNA(Thr). Also edits incorrectly charged L-seryl-tRNA(Thr). The chain is Threonine--tRNA ligase from Bifidobacterium longum (strain NCC 2705).